The following is a 274-amino-acid chain: 2,3,4,5-tetrahydropyridine-2,6-dicarboxylate N-succinyltransferase (274 aa).

Residues Arg-104 and Asp-141 each contribute to the substrate site.

It belongs to the transferase hexapeptide repeat family. Homotrimer.

It is found in the cytoplasm. It carries out the reaction (S)-2,3,4,5-tetrahydrodipicolinate + succinyl-CoA + H2O = (S)-2-succinylamino-6-oxoheptanedioate + CoA. The protein operates within amino-acid biosynthesis; L-lysine biosynthesis via DAP pathway; LL-2,6-diaminopimelate from (S)-tetrahydrodipicolinate (succinylase route): step 1/3. The sequence is that of 2,3,4,5-tetrahydropyridine-2,6-dicarboxylate N-succinyltransferase from Shewanella oneidensis (strain ATCC 700550 / JCM 31522 / CIP 106686 / LMG 19005 / NCIMB 14063 / MR-1).